We begin with the raw amino-acid sequence, 179 residues long: Large ribosomal subunit protein uL5 (179 aa).

The protein belongs to the universal ribosomal protein uL5 family. As to quaternary structure, part of the 50S ribosomal subunit; part of the 5S rRNA/L5/L18/L25 subcomplex. Contacts the 5S rRNA and the P site tRNA. Forms a bridge to the 30S subunit in the 70S ribosome.

In terms of biological role, this is one of the proteins that bind and probably mediate the attachment of the 5S RNA into the large ribosomal subunit, where it forms part of the central protuberance. In the 70S ribosome it contacts protein S13 of the 30S subunit (bridge B1b), connecting the 2 subunits; this bridge is implicated in subunit movement. Contacts the P site tRNA; the 5S rRNA and some of its associated proteins might help stabilize positioning of ribosome-bound tRNAs. This is Large ribosomal subunit protein uL5 from Nitrosospira multiformis (strain ATCC 25196 / NCIMB 11849 / C 71).